The chain runs to 295 residues: Small ribosomal subunit protein uS2 (295 aa).

The segment at 264–295 is disordered; it reads KFSKTKNIDEETNTEFEQALNDTDENKNADNA.

It belongs to the universal ribosomal protein uS2 family.

This Rickettsia akari (strain Hartford) protein is Small ribosomal subunit protein uS2.